Consider the following 369-residue polypeptide: Anhydro-N-acetylmuramic acid kinase (369 aa).

Position 12-19 (12-19) interacts with ATP; that stretch reads GTSLDGVD.

Belongs to the anhydro-N-acetylmuramic acid kinase family.

The enzyme catalyses 1,6-anhydro-N-acetyl-beta-muramate + ATP + H2O = N-acetyl-D-muramate 6-phosphate + ADP + H(+). It functions in the pathway amino-sugar metabolism; 1,6-anhydro-N-acetylmuramate degradation. It participates in cell wall biogenesis; peptidoglycan recycling. Its function is as follows. Catalyzes the specific phosphorylation of 1,6-anhydro-N-acetylmuramic acid (anhMurNAc) with the simultaneous cleavage of the 1,6-anhydro ring, generating MurNAc-6-P. Is required for the utilization of anhMurNAc either imported from the medium or derived from its own cell wall murein, and thus plays a role in cell wall recycling. The chain is Anhydro-N-acetylmuramic acid kinase from Escherichia coli O139:H28 (strain E24377A / ETEC).